The following is an 821-amino-acid chain: Spindle apparatus protein lin-5 (821 aa).

The disordered stretch occupies residues 161–199 (EASSGFRTPKRNNYSLTSLQTPTATARRLRTASSTARRS). Residues 162–180 (ASSGFRTPKRNNYSLTSLQ) are compositionally biased toward polar residues. The span at 181–199 (TPTATARRLRTASSTARRS) shows a compositional bias: low complexity. Residues 211-634 (KFMRSERELK…REKESAEIKK (424 aa)) are a coiled coil. 2 disordered regions span residues 736 to 758 (RSESIQLASPSSAGEFKQPFTPS) and 779 to 821 (LKCS…SKKQ).

In terms of assembly, interacts with gpr-1; gpr-1 forms a complex with gpr-2 and GDP-bound goa-1.

Its subcellular location is the cytoplasm. It localises to the cell cortex. The protein localises to the cytoskeleton. The protein resides in the spindle. It is found in the chromosome. Its subcellular location is the centromere. It localises to the kinetochore. The protein localises to the microtubule organizing center. The protein resides in the centrosome. Essential component of the spindle apparatus required for spindle positioning and chromosome movement. Acts to recruit or anchor gpr-1/gpr-2 complex to the spindle and cortex. Also involved, directly or indirectly, in cytokinesis and in the coupling of DNA replication, centrosome duplication and mitotic division. This chain is Spindle apparatus protein lin-5 (lin-5), found in Caenorhabditis elegans.